Consider the following 483-residue polypeptide: tRNA sulfurtransferase (483 aa).

The 105-residue stretch at 63-167 (GQLIDMLART…DDQVYLVTKK (105 aa)) folds into the THUMP domain. Residues 185–186 (LI), Lys267, Gly289, and Gln298 contribute to the ATP site. A disulfide bridge links Cys346 with Cys457. The Rhodanese domain occupies 405 to 483 (LPVSAKVIDI…GYTNVGVYRP (79 aa)). The active-site Cysteine persulfide intermediate is Cys457.

This sequence belongs to the ThiI family.

It localises to the cytoplasm. The enzyme catalyses [ThiI sulfur-carrier protein]-S-sulfanyl-L-cysteine + a uridine in tRNA + 2 reduced [2Fe-2S]-[ferredoxin] + ATP + H(+) = [ThiI sulfur-carrier protein]-L-cysteine + a 4-thiouridine in tRNA + 2 oxidized [2Fe-2S]-[ferredoxin] + AMP + diphosphate. It carries out the reaction [ThiS sulfur-carrier protein]-C-terminal Gly-Gly-AMP + S-sulfanyl-L-cysteinyl-[cysteine desulfurase] + AH2 = [ThiS sulfur-carrier protein]-C-terminal-Gly-aminoethanethioate + L-cysteinyl-[cysteine desulfurase] + A + AMP + 2 H(+). It participates in cofactor biosynthesis; thiamine diphosphate biosynthesis. Catalyzes the ATP-dependent transfer of a sulfur to tRNA to produce 4-thiouridine in position 8 of tRNAs, which functions as a near-UV photosensor. Also catalyzes the transfer of sulfur to the sulfur carrier protein ThiS, forming ThiS-thiocarboxylate. This is a step in the synthesis of thiazole, in the thiamine biosynthesis pathway. The sulfur is donated as persulfide by IscS. The sequence is that of tRNA sulfurtransferase from Saccharophagus degradans (strain 2-40 / ATCC 43961 / DSM 17024).